Here is a 251-residue protein sequence, read N- to C-terminus: Putative imidazole glycerol phosphate synthase subunit hisF2 (251 aa).

The active site involves Asp-130.

It belongs to the HisA/HisF family. As to quaternary structure, heterodimer of HisH and HisF.

Its subcellular location is the cytoplasm. It catalyses the reaction 5-[(5-phospho-1-deoxy-D-ribulos-1-ylimino)methylamino]-1-(5-phospho-beta-D-ribosyl)imidazole-4-carboxamide + L-glutamine = D-erythro-1-(imidazol-4-yl)glycerol 3-phosphate + 5-amino-1-(5-phospho-beta-D-ribosyl)imidazole-4-carboxamide + L-glutamate + H(+). The protein operates within amino-acid biosynthesis; L-histidine biosynthesis; L-histidine from 5-phospho-alpha-D-ribose 1-diphosphate: step 5/9. Functionally, IGPS catalyzes the conversion of PRFAR and glutamine to IGP, AICAR and glutamate. The HisF subunit catalyzes the cyclization activity that produces IGP and AICAR from PRFAR using the ammonia provided by the HisH subunit. The chain is Putative imidazole glycerol phosphate synthase subunit hisF2 (hisF2) from Pseudomonas aeruginosa (strain ATCC 15692 / DSM 22644 / CIP 104116 / JCM 14847 / LMG 12228 / 1C / PRS 101 / PAO1).